A 72-amino-acid chain; its full sequence is Large ribosomal subunit protein uL29 (72 aa).

This sequence belongs to the universal ribosomal protein uL29 family.

In Thermus thermophilus (strain ATCC BAA-163 / DSM 7039 / HB27), this protein is Large ribosomal subunit protein uL29.